A 255-amino-acid polypeptide reads, in one-letter code: Hydroxyacylglutathione hydrolase (255 aa).

Zn(2+) contacts are provided by histidine 53, histidine 55, aspartate 57, histidine 58, histidine 110, aspartate 127, and histidine 165.

This sequence belongs to the metallo-beta-lactamase superfamily. Glyoxalase II family. In terms of assembly, monomer. The cofactor is Zn(2+).

It catalyses the reaction an S-(2-hydroxyacyl)glutathione + H2O = a 2-hydroxy carboxylate + glutathione + H(+). Its pathway is secondary metabolite metabolism; methylglyoxal degradation; (R)-lactate from methylglyoxal: step 2/2. In terms of biological role, thiolesterase that catalyzes the hydrolysis of S-D-lactoyl-glutathione to form glutathione and D-lactic acid. The sequence is that of Hydroxyacylglutathione hydrolase from Xanthomonas oryzae pv. oryzae (strain MAFF 311018).